We begin with the raw amino-acid sequence, 317 residues long: Olfactory receptor 51Q1 (317 aa).

At 1–27 the chain is on the extracellular side; it reads MSQVTNTTQEGIYFILTDIPGFEASHI. Asparagine 6 is a glycosylation site (N-linked (GlcNAc...) asparagine). Residues 28-48 form a helical membrane-spanning segment; the sequence is WISIPVCCLYTISIMGNTTIL. The Cytoplasmic segment spans residues 49–56; the sequence is TVIRTEPS. Residues 57-77 traverse the membrane as a helical segment; that stretch reads VHQRMYLFLSMLALTDLGLTL. Topologically, residues 78-101 are extracellular; sequence TTLPTVMQLLWFNVRRISSEACFA. A disulfide bridge connects residues cysteine 99 and cysteine 191. The chain crosses the membrane as a helical span at residues 102–122; it reads QFFFLHGFSFMESSVLLAMSV. Over 123 to 141 the chain is Cytoplasmic; the sequence is DCYVAICCPLHYASILTNE. A helical membrane pass occupies residues 142–162; the sequence is VIGRTGLAIICCCVLAVLPSL. Residues 163–198 are Extracellular-facing; it reads FLLKRLPFCHSHLLSRSYCLHQDMIRLVCADIRLNS. A helical transmembrane segment spans residues 199–219; the sequence is WYGFALALLIIIVDPLLIVIS. Residues 220–239 are Cytoplasmic-facing; that stretch reads YTLILKNILGTATWAERLRA. The chain crosses the membrane as a helical span at residues 240-260; it reads LNNCLSHILAVLVLYIPMVGV. Topologically, residues 261–275 are extracellular; it reads SMTHRFAKHASPLVH. Residues 276–296 traverse the membrane as a helical segment; sequence VIMANIYLLAPPVMNPIIYSV. The Cytoplasmic portion of the chain corresponds to 297 to 317; sequence KNKQIQWGMLNFLSLKNMHSR.

Belongs to the G-protein coupled receptor 1 family.

It localises to the cell membrane. Odorant receptor. The protein is Olfactory receptor 51Q1 (OR51Q1) of Homo sapiens (Human).